The primary structure comprises 185 residues: Ribosome-recycling factor (185 aa).

This sequence belongs to the RRF family.

The protein localises to the cytoplasm. In terms of biological role, responsible for the release of ribosomes from messenger RNA at the termination of protein biosynthesis. May increase the efficiency of translation by recycling ribosomes from one round of translation to another. This is Ribosome-recycling factor from Oceanobacillus iheyensis (strain DSM 14371 / CIP 107618 / JCM 11309 / KCTC 3954 / HTE831).